We begin with the raw amino-acid sequence, 218 residues long: Cytochrome b6 (218 aa).

A helical membrane pass occupies residues 35-55 (IFYCLGGITLVCFLIQFATGF). Cys38 is a heme c binding site. Residues His89 and His103 each contribute to the heme b site. The next 3 helical transmembrane spans lie at 93-113 (ASMMVLMLILHVFRVYLTGGF), 119-139 (LTWVTGVVMAVITVAFGVTGY), and 189-209 (LHTFVLPWTLAIFMLMHFLMI). Heme b contacts are provided by His190 and His205.

This sequence belongs to the cytochrome b family. PetB subfamily. The 4 large subunits of the cytochrome b6-f complex are cytochrome b6, subunit IV (17 kDa polypeptide, PetD), cytochrome f and the Rieske protein, while the 4 small subunits are PetG, PetL, PetM and PetN. The complex functions as a dimer. Heme b is required as a cofactor. The cofactor is heme c.

The protein localises to the cellular thylakoid membrane. Functionally, component of the cytochrome b6-f complex, which mediates electron transfer between photosystem II (PSII) and photosystem I (PSI), cyclic electron flow around PSI, and state transitions. The protein is Cytochrome b6 of Prochlorococcus marinus (strain SARG / CCMP1375 / SS120).